The chain runs to 149 residues: D-aminoacyl-tRNA deacylase (149 aa).

A Gly-cisPro motif, important for rejection of L-amino acids motif is present at residues 137-138 (GP).

This sequence belongs to the DTD family. As to quaternary structure, homodimer.

It localises to the cytoplasm. It catalyses the reaction glycyl-tRNA(Ala) + H2O = tRNA(Ala) + glycine + H(+). The catalysed reaction is a D-aminoacyl-tRNA + H2O = a tRNA + a D-alpha-amino acid + H(+). Functionally, an aminoacyl-tRNA editing enzyme that deacylates mischarged D-aminoacyl-tRNAs. Also deacylates mischarged glycyl-tRNA(Ala), protecting cells against glycine mischarging by AlaRS. Acts via tRNA-based rather than protein-based catalysis; rejects L-amino acids rather than detecting D-amino acids in the active site. By recycling D-aminoacyl-tRNA to D-amino acids and free tRNA molecules, this enzyme counteracts the toxicity associated with the formation of D-aminoacyl-tRNA entities in vivo and helps enforce protein L-homochirality. This is D-aminoacyl-tRNA deacylase from Thioalkalivibrio sulfidiphilus (strain HL-EbGR7).